Reading from the N-terminus, the 551-residue chain is Ubiquitin domain-containing protein DSK2b (551 aa).

The Ubiquitin-like domain occupies 18–93 (VAVNIRCSNG…IHMVRGSAPS (76 aa)). The segment at 88 to 127 (RGSAPSSAPPPAPAASQTTAPSVTRGVGSDNSSNLGGASP) is disordered. 2 STI1 domains span residues 143–184 (GNAM…QNLM) and 197–236 (NPQMRELVDRNPELGHVLNDPSILRQTLEAARNPELMREM). Positions 294-319 (QGVTTQGSDASNNSSTPNAGTGTIPN) are enriched in polar residues. The disordered stretch occupies residues 294–336 (QGVTTQGSDASNNSSTPNAGTGTIPNANPLPNPWGATGGQTTA). STI1 domains lie at 373–410 (SPLGATPDASQLSQLLQNPAISQMMQSVFSNPQYMNQL) and 414–449 (NPQLRSMLDSNPQLREMMQNPDFLRQFSSPEMMQQM). The tract at residues 455–475 (SLSQNRNTASQDAGQTGAATG) is disordered. Positions 465-475 (QDAGQTGAATG) are enriched in low complexity. In terms of domain architecture, UBA spans 504–548 (PPEERYATQLQQLQEMGFYDRAENIRALLATNGNVNAAVERLLGS).

In terms of assembly, interacts with 'Lys-48'-linked polyubiquitin chains via its UBA domain. Interacts with RPN10 via its ubiquitin-like domain. Interacts with PEX2 and PEX12. As to expression, ubiquitous.

Its subcellular location is the nucleus. It is found in the cytoplasm. Its function is as follows. Binds and presumably selects ubiquitin-conjugates for destruction. Prefers multiubiquitin chains rather than single ubiquitins, with a binding affinity for 'Lys-48'-linked ubiquitin chains. Acts as a ubiquitin receptor that associates with the 26S proteasomal docking subunit RPN10 for the indirect recognition of ubiquitinated substrates of ubiquitin/26S proteasome-mediated proteolysis (UPP). In Arabidopsis thaliana (Mouse-ear cress), this protein is Ubiquitin domain-containing protein DSK2b (DSK2B).